The primary structure comprises 602 residues: FAD-binding monooxygenase hmp7 (602 aa).

FAD-binding positions include 108–111 (TWYW), 120–121 (DV), and Y126. Position 118–120 (118–120 (QCD)) interacts with NADP(+). NADP(+)-binding positions include 252–258 (TGATAVQ) and 275–276 (RT).

This sequence belongs to the FAD-binding monooxygenase family. The cofactor is FAD.

It participates in secondary metabolite biosynthesis. Functionally, FAD-binding monooxygenase; part of the gene cluster that mediates the biosynthesis of hypothemycin, a resorcylic acid lactone (RAL) that irreversibly inhibits a subset of protein kinases with a conserved cysteine in the ATP binding site such as human ERK2. The first step is performed by both PKSs hmp3 and hmp8 and leads to the production of 7',8'-dehydrozearalenol (DHZ). The highly reducing PKS hpm8 synthesizes the reduced hexaketide (7S,11S,2E,8E)-7,11-dihydroxy-dodeca-2,8-dienoate, which is transferred downstream to the non-reducing PKS hpm3. Hpm3 then extends the reduced hexaketide to a nonaketide, after which regioselective cyclization and macrolactonization affords DHZ. The next step is the conversion of DHZ into aigialomycin C and is performed by the O-methyltransferase hmp5, the FAD-binding monooxygenase hmp7, and the cytochrome P450 monooxygenase hmp1. The wide substrate tolerance of the hmp5 and hmp7 implies that the reactions from DHZ to aigialomycin C can occur in any order. The steps from aigialomycin C to hypothemycin are less well established. The FAD-linked oxidoreductase hmp9 presumably catalyzes oxidation of the C-6' hydroxyl to a ketone. The timing of this oxidation is important, since the resulting enone functional group is a Michael acceptor that can react spontaneously with glutathione, an abundant metabolite in fungal cells. The glutathione S-transferase hmp2 catalyzes cis-trans isomerization of the 7',8' double bond with equilibrium favoring the trans isomer. The hpm6-encoded transporter might preferentially pump hypothemycin out of the cell relative to the trans isomer aigialomycin A. The cis-to-trans isomerization may be coupled with C-4' hydroxylation, since all known hypothemycin analogs containing the enone functional group also have hydroxyl groups at both C-4' and C-5'. In Hypomyces subiculosus (Nectria subiculosa), this protein is FAD-binding monooxygenase hmp7.